The sequence spans 213 residues: Methylthioribulose-1-phosphate dehydratase (213 aa).

Zn(2+) is bound by residues histidine 104 and histidine 106.

This sequence belongs to the aldolase class II family. MtnB subfamily. Zn(2+) serves as cofactor.

The catalysed reaction is 5-(methylsulfanyl)-D-ribulose 1-phosphate = 5-methylsulfanyl-2,3-dioxopentyl phosphate + H2O. It participates in amino-acid biosynthesis; L-methionine biosynthesis via salvage pathway; L-methionine from S-methyl-5-thio-alpha-D-ribose 1-phosphate: step 2/6. Its function is as follows. Catalyzes the dehydration of methylthioribulose-1-phosphate (MTRu-1-P) into 2,3-diketo-5-methylthiopentyl-1-phosphate (DK-MTP-1-P). The polypeptide is Methylthioribulose-1-phosphate dehydratase (Stenotrophomonas maltophilia (strain R551-3)).